Reading from the N-terminus, the 1031-residue chain is Protein draper (1031 aa).

A signal peptide spans 1 to 16 (MLPVILIACLAQLVLA). The Extracellular portion of the chain corresponds to 17-800 (QADLKDLDGP…DQSENSSRAS (784 aa)). Positions 25–100 (GPNICKRREL…YIASAGECVP (76 aa)) constitute an EMI domain. Disulfide bonds link C29–C88, C55–C62, C87–C98, C102–C111, C106–C117, and C119–C128. N73 is a glycosylation site (N-linked (GlcNAc...) asparagine). 6 EGF-like domains span residues 99–129 (VPHC…PACD), 137–172 (YGRN…ARCA), 180–215 (FGAN…PLCD), 223–258 (HGAQ…DVCA), 266–301 (YGPG…ERCF), and 309–344 (YGFN…AKCA). N140 carries N-linked (GlcNAc...) asparagine glycosylation. 3 disulfide bridges follow: C141–C153, C147–C160, and C162–C171. An N-linked (GlcNAc...) asparagine glycan is attached at N183. Disulfide bonds link C184/C196, C190/C203, C205/C214, C227/C239, C233/C246, C248/C257, C270/C282, C276/C289, and C291/C300. The N-linked (GlcNAc...) asparagine glycan is linked to N312. Intrachain disulfides connect C313/C325, C319/C332, and C334/C343. N329 carries N-linked (GlcNAc...) asparagine glycosylation. N358 is a glycosylation site (N-linked (GlcNAc...) asparagine). EGF-like domains are found at residues 398-433 (YGPN…PTCE) and 484-519 (FGQD…ERCE). Disulfide bonds link C402/C414, C408/C421, C423/C432, C488/C500, C494/C507, and C509/C518. N418 carries an N-linked (GlcNAc...) asparagine glycan. N504 carries N-linked (GlcNAc...) asparagine glycosylation. 3 N-linked (GlcNAc...) asparagine glycosylation sites follow: N540, N584, and N585. Residues 572–607 (YGENCDKVCRCLNNSSCDPDSGNCICSAGWTGADCA) enclose the EGF-like 9 domain. Cystine bridges form between C576/C588, C582/C595, and C597/C606. An N-linked (GlcNAc...) asparagine glycan is attached at N630. Residues 660–695 (YGPGCKLKCNCEHGGECNHVTGQCQCLPGWTGSNCN) form the EGF-like 10 domain. 3 disulfide bridges follow: C664-C676, C670-C683, and C685-C694. N-linked (GlcNAc...) asparagine glycosylation is found at N695 and N795. Residues 801–821 (VALTLVLMTLFACIIFAVFIY) form a helical membrane-spanning segment. Residues 822 to 1031 (YRRRVSNLKT…SPSSSPKFLK (210 aa)) lie on the Cytoplasmic side of the membrane. Residues 940–954 (KEGYKDPDEYDHLDY) are compositionally biased toward basic and acidic residues. Disordered regions lie at residues 940–964 (KEGY…QKPH) and 989–1031 (TVLL…KFLK). The segment covering 1009-1031 (DNTNTNLDNVSTASPSSSPKFLK) has biased composition (polar residues).

The protein belongs to the MEGF family. Interacts (via the cytoplasmic domain) with shark; this is required for the recruitment of drpr and glial cells to severed axons and for the phagocytosis of axonal debris by glial cells following axon injury. Interacts with ced-6. As to quaternary structure, interacts with csw; this results in dephosphorylation of drpr isoform A which is required for the inhibition of glial cell engulfment of axonal debris produced following axonal injury. In terms of processing, phosphorylated on tyrosine residues. Phosphorylation is induced by binding to prtp. It is also induced by binding to the membrane phospholipid phosphatidylserine. Phosphorylation may be mediated directly or indirectly by Src42a and is required for interaction with shark. Post-translationally, dephosphorylated by csw which is required for the inhibition of glial cell engulfment of axonal debris produced following axonal injury. Expressed in adult head (at protein level). Expressed in glia, macrophages and ectoderm (at protein level). Detected in glia around the mushroom body dorsal lobe and in glial processes infiltrating the medial lobe (at protein level). Expressed in adult brain glia including antennal lobe glia (at protein level). Expressed in the larval fat body (at protein level). Expressed in the ovary (at protein level). Isoform B: Predominant isoform in adult glia.

It is found in the cell membrane. The protein resides in the cell projection. Its subcellular location is the axon. It localises to the cytoplasm. The protein localises to the postsynaptic cell membrane. It is found in the cell cortex. The protein resides in the phagocytic cup. Its subcellular location is the cytoplasmic vesicle. It localises to the phagosome. In terms of biological role, receptor which is involved in the phagocytosis of a variety of cells including apoptotic cells, severed and pruned axons, degenerating dendrites, salivary gland cells, germline cells and bacteria. Binds to the ligand prtp which relocates from the endoplasmic reticulum to the cell surface during apoptosis. Ligand-binding may promote tyrosine phosphorylation mediated by Src42a, interaction with shark and subsequent activation of phagocytosis. Also binds to the membrane phospholipid phosphatidylserine which is exposed on the surface of apoptotic cells. Required for the phagocytosis of apoptotic cells by macrophages. Also required for the phagocytosis of apoptotic neurons by glial cells in the embryonic nervous system. Acts downstream of NimC4/simu in the glial phagocytosis of apoptotic neurons. Plays a role in the glial engulfment of larval axons as part of programmed axon pruning during metamorphosis. Also mediates glial cell clearance of severed axons following axonal injury. Required for the engulfment of degenerating dendrites by epidermal cells. Required in the ovary for the engulfment and subsequent processing of dying germline cells by follicular epithelial cells through activation of the JNK/bsk pathway. Plays a role in neuromuscular junction development by mediating the clearance of presynaptic debris and immature boutons which are shed by growing synapses. Required for larval salivary gland cell death which occurs following a rise in steroid levels after puparium formation. Also involved in bacterial phagocytosis. Required for hemocyte phagocytosis of the Gram-positive bacterium S.aureus. Lipoteichoic acid, synthesized by the S.aureus lipoteichoic acid synthase ltaS, acts as a ligand for drpr in this process. Together with Src42a and shark, promotes the migration of macrophages to sites of wounding as part of a signaling cascade where Scr42a detects production of hydrogen peroxide at wound sites which triggers phosphorylation of drpr and subsequent recruitment and activation of shark. Also required for macrophage priming which occurs following phagocytosis of apoptotic cells and ensures that macrophages develop a form of molecular memory that allows them to later mount an inflammatory response to tissue damage and bacterial infection. Is also an essential factor in the regulation of muscle development and myogenesis, and as a consequence is required for normal locomotion. Likely to control the balance between skeletal muscle satellite cells proliferation and differentiation through regulation of the notch signaling pathway. Its function is as follows. Promotes engulfment of axonal debris by glial cells following axonal injury. Functionally, potently inhibits glial cell engulfment of axonal debris produced following axonal injury. The polypeptide is Protein draper (Drosophila melanogaster (Fruit fly)).